The following is a 467-amino-acid chain: Ribulose bisphosphate carboxylase large chain (467 aa).

Xaa-106 and Thr-156 together coordinate substrate. Residue Lys-158 is the Proton acceptor of the active site. Lys-160 provides a ligand contact to substrate. The Mg(2+) site is built by Lys-184, Asp-186, and Glu-187. Position 184 is an N6-carboxylysine (Lys-184). The Proton acceptor role is filled by His-276. Substrate is bound by residues Arg-277, His-309, and Ser-361.

The protein belongs to the RuBisCO large chain family. Type I subfamily. In terms of assembly, heterohexadecamer of 8 large chains and 8 small chains. Requires Mg(2+) as cofactor.

Its subcellular location is the plastid. It localises to the chloroplast. It catalyses the reaction 2 (2R)-3-phosphoglycerate + 2 H(+) = D-ribulose 1,5-bisphosphate + CO2 + H2O. It carries out the reaction D-ribulose 1,5-bisphosphate + O2 = 2-phosphoglycolate + (2R)-3-phosphoglycerate + 2 H(+). Its function is as follows. RuBisCO catalyzes two reactions: the carboxylation of D-ribulose 1,5-bisphosphate, the primary event in carbon dioxide fixation, as well as the oxidative fragmentation of the pentose substrate in the photorespiration process. Both reactions occur simultaneously and in competition at the same active site. This is Ribulose bisphosphate carboxylase large chain (rbcL) from Chondrus crispus (Carrageen Irish moss).